We begin with the raw amino-acid sequence, 938 residues long: Leucine--tRNA ligase 1 (938 aa).

A 'HIGH' region motif is present at residues 40 to 50 (PYTNSPLHIGH). The short motif at 620–624 (KMSKS) is the 'KMSKS' region element. Residue lysine 623 coordinates ATP.

The protein belongs to the class-I aminoacyl-tRNA synthetase family.

The protein localises to the cytoplasm. The enzyme catalyses tRNA(Leu) + L-leucine + ATP = L-leucyl-tRNA(Leu) + AMP + diphosphate. The sequence is that of Leucine--tRNA ligase 1 from Metallosphaera sedula (strain ATCC 51363 / DSM 5348 / JCM 9185 / NBRC 15509 / TH2).